Here is a 557-residue protein sequence, read N- to C-terminus: Aerobic glycerol-3-phosphate dehydrogenase (557 aa).

FAD is bound at residue 21–49 (DLVIIGGGITGAGIALDASERGMKVALVE).

Belongs to the FAD-dependent glycerol-3-phosphate dehydrogenase family. The cofactor is FAD.

The protein resides in the cytoplasm. It carries out the reaction a quinone + sn-glycerol 3-phosphate = dihydroxyacetone phosphate + a quinol. It functions in the pathway polyol metabolism; glycerol degradation via glycerol kinase pathway; glycerone phosphate from sn-glycerol 3-phosphate (aerobic route): step 1/1. This Staphylococcus aureus (strain bovine RF122 / ET3-1) protein is Aerobic glycerol-3-phosphate dehydrogenase (glpD).